The chain runs to 240 residues: tRNA (guanine-N(7)-)-methyltransferase (240 aa).

Residues 1 to 20 are disordered; it reads MTESHDTPITSDGEARPHRR. E70, E95, D122, and D145 together coordinate S-adenosyl-L-methionine. Residue D145 is part of the active site. Substrate-binding positions include K149, D181, and 218 to 221; that span reads TKFE.

The protein belongs to the class I-like SAM-binding methyltransferase superfamily. TrmB family.

It catalyses the reaction guanosine(46) in tRNA + S-adenosyl-L-methionine = N(7)-methylguanosine(46) in tRNA + S-adenosyl-L-homocysteine. Its pathway is tRNA modification; N(7)-methylguanine-tRNA biosynthesis. In terms of biological role, catalyzes the formation of N(7)-methylguanine at position 46 (m7G46) in tRNA. The polypeptide is tRNA (guanine-N(7)-)-methyltransferase (Pseudomonas putida (strain ATCC 700007 / DSM 6899 / JCM 31910 / BCRC 17059 / LMG 24140 / F1)).